A 354-amino-acid chain; its full sequence is UDP-3-O-acylglucosamine N-acyltransferase (354 aa).

His258 functions as the Proton acceptor in the catalytic mechanism.

It belongs to the transferase hexapeptide repeat family. LpxD subfamily. Homotrimer.

The catalysed reaction is a UDP-3-O-[(3R)-3-hydroxyacyl]-alpha-D-glucosamine + a (3R)-hydroxyacyl-[ACP] = a UDP-2-N,3-O-bis[(3R)-3-hydroxyacyl]-alpha-D-glucosamine + holo-[ACP] + H(+). It participates in bacterial outer membrane biogenesis; LPS lipid A biosynthesis. Catalyzes the N-acylation of UDP-3-O-acylglucosamine using 3-hydroxyacyl-ACP as the acyl donor. Is involved in the biosynthesis of lipid A, a phosphorylated glycolipid that anchors the lipopolysaccharide to the outer membrane of the cell. The sequence is that of UDP-3-O-acylglucosamine N-acyltransferase from Sinorhizobium medicae (strain WSM419) (Ensifer medicae).